The primary structure comprises 393 residues: Phosphoglycerate kinase (393 aa).

Substrate-binding positions include 22-24, Arg37, 60-63, Arg119, and Arg152; these read DFN and HLGR. ATP is bound by residues Lys202, Gly293, Glu324, and 350-353; that span reads GGDS.

Belongs to the phosphoglycerate kinase family. In terms of assembly, monomer.

The protein resides in the cytoplasm. It carries out the reaction (2R)-3-phosphoglycerate + ATP = (2R)-3-phospho-glyceroyl phosphate + ADP. It participates in carbohydrate degradation; glycolysis; pyruvate from D-glyceraldehyde 3-phosphate: step 2/5. This Borreliella burgdorferi (strain ATCC 35210 / DSM 4680 / CIP 102532 / B31) (Borrelia burgdorferi) protein is Phosphoglycerate kinase (pgk).